The following is an 89-amino-acid chain: Small ribosomal subunit protein uS17 (89 aa).

The protein belongs to the universal ribosomal protein uS17 family. Part of the 30S ribosomal subunit.

One of the primary rRNA binding proteins, it binds specifically to the 5'-end of 16S ribosomal RNA. This Verminephrobacter eiseniae (strain EF01-2) protein is Small ribosomal subunit protein uS17.